A 169-amino-acid polypeptide reads, in one-letter code: MSSEIAYSNTNTNTENENRNTGAGVDVNTNANANANATANATANATANATAELNLPTVDEQRQYKVQLLLHINSILLARVIQMNNSLQNNLQNNINNSNNNNIIRIQQLISQFLKRVHANLQCISQINQGVPSAKPLILTPPQLANQQQPPQDILSKLYLLLARVFEIW.

A disordered region spans residues 1–24 (MSSEIAYSNTNTNTENENRNTGAG). S2 is subject to N-acetylserine. Over residues 9–21 (NTNTNTENENRNT) the composition is skewed to low complexity. A run of 8 repeats spans residues 28-31 (NTNA), 32-35 (NANA), 36-39 (NATA), 40-43 (NATA), 44-47 (NATA), 48-51 (NATA), 76-80 (LLARV), and 160-165 (LLLARV). The interval 28 to 51 (NTNANANANATANATANATANATA) is 6 X 4 AA tandem repeats of N-[AT]-[NT]-A. Residues 76-165 (LLARVIQMNN…SKLYLLLARV (90 aa)) form a 2 X 5 AA repeats of L-L-A-R-V region.

In terms of assembly, component of the SWI/SNF global transcription activator complex. The 1.14 MDa SWI/SNF complex is composed of 11 different subunits: one copy each of SWI1, SNF2/SWI2, SNF5, SNF12/SWP73, ARP7/SWP61, ARP9/SWP59; two copies each of SWI3, SNF6, SNF11, SWP82; and three copies of TAF14/SWP29.

The protein localises to the nucleus. Involved in transcriptional activation. Component of the SWI/SNF complex, an ATP-dependent chromatin remodeling complex, which is required for the positive and negative regulation of gene expression of a large number of genes. It changes chromatin structure by altering DNA-histone contacts within a nucleosome, leading eventually to a change in nucleosome position, thus facilitating or repressing binding of gene-specific transcription factors. This is Transcription regulatory protein SNF11 (SNF11) from Saccharomyces cerevisiae (strain ATCC 204508 / S288c) (Baker's yeast).